Consider the following 921-residue polypeptide: uncharacterized protein (921 aa).

The tract at residues 334 to 628 (MTKRKFLSID…NLKSIYYDFF (295 aa)) is kinase-like. The segment covering 401-494 (GSSEWSFGSS…NNNNSDGSSG (94 aa)) has biased composition (low complexity). Disordered regions lie at residues 401–499 (GSSE…DNRN) and 664–711 (NLYS…NSNS).

This is an uncharacterized protein from Dictyostelium discoideum (Social amoeba).